We begin with the raw amino-acid sequence, 1125 residues long: Probable inorganic carbon transporter subunit DabA (1125 aa).

4 residues coordinate Zn(2+): cysteine 578, aspartate 580, histidine 769, and cysteine 784. Residues 1106 to 1125 are disordered; the sequence is SDPRPPALVEPKQTETHHAA.

It belongs to the inorganic carbon transporter (TC 9.A.2) DabA family. In terms of assembly, forms a complex with DabB. Requires Zn(2+) as cofactor.

Its subcellular location is the cell inner membrane. Functionally, part of an energy-coupled inorganic carbon pump. In Nitrosococcus oceani (strain ATCC 19707 / BCRC 17464 / JCM 30415 / NCIMB 11848 / C-107), this protein is Probable inorganic carbon transporter subunit DabA.